The following is a 369-amino-acid chain: Peptide chain release factor 2 (369 aa).

Gln251 is subject to N5-methylglutamine.

The protein belongs to the prokaryotic/mitochondrial release factor family. Post-translationally, methylated by PrmC. Methylation increases the termination efficiency of RF2.

The protein localises to the cytoplasm. Peptide chain release factor 2 directs the termination of translation in response to the peptide chain termination codons UGA and UAA. The polypeptide is Peptide chain release factor 2 (Acidothermus cellulolyticus (strain ATCC 43068 / DSM 8971 / 11B)).